The sequence spans 87 residues: Phosphoribosyl-ATP pyrophosphatase (87 aa).

The protein belongs to the PRA-PH family.

It localises to the cytoplasm. The enzyme catalyses 1-(5-phospho-beta-D-ribosyl)-ATP + H2O = 1-(5-phospho-beta-D-ribosyl)-5'-AMP + diphosphate + H(+). The protein operates within amino-acid biosynthesis; L-histidine biosynthesis; L-histidine from 5-phospho-alpha-D-ribose 1-diphosphate: step 2/9. The chain is Phosphoribosyl-ATP pyrophosphatase from Bifidobacterium animalis subsp. lactis (strain AD011).